The sequence spans 724 residues: Threonine--tRNA ligase 2, cytoplasmic (724 aa).

Ala2 carries the post-translational modification N-acetylalanine. Residues Gln44–Arg72 are a coiled coil. The tract at residues Arg90–Val112 is disordered. Positions Asp155 to Thr220 constitute a TGS domain. The residue at position 451 (Ser451) is a Phosphoserine.

It belongs to the class-II aminoacyl-tRNA synthetase family. May be a component of the multisynthetase complex (MSC), a large multi-subunit complex which contains at least eight different aminoacyl-tRNA synthetases plus three auxillary subunits AIMP1, AIMP2 and EEF1E1. Interacts with the MSC components EPRS1, AIMP1, AIMP2 and KARS1.

It localises to the cytoplasm. Its subcellular location is the nucleus. The catalysed reaction is tRNA(Thr) + L-threonine + ATP = L-threonyl-tRNA(Thr) + AMP + diphosphate + H(+). Its function is as follows. Catalyzes the attachment of threonine to tRNA(Thr) in a two-step reaction: threonine is first activated by ATP to form Thr-AMP and then transferred to the acceptor end of tRNA(Thr). Also edits incorrectly charged tRNA(Thr) via its editing domain, at the post-transfer stage. The sequence is that of Threonine--tRNA ligase 2, cytoplasmic (TARS3) from Bos taurus (Bovine).